The primary structure comprises 693 residues: Testis-specific Y-encoded-like protein 2 (693 aa).

Disordered stretches follow at residues Met1–Gln56 and Gly104–Gly125. Lys11 participates in a covalent cross-link: Glycyl lysine isopeptide (Lys-Gly) (interchain with G-Cter in SUMO2). 2 positions are modified to phosphoserine: Ser18 and Ser20. Residues Arg23 to Gln44 show a composition bias toward pro residues. Residues Lys163 and Lys165 each participate in a glycyl lysine isopeptide (Lys-Gly) (interchain with G-Cter in SUMO2) cross-link. The segment at Glu175 to Arg207 is disordered. Residues Ser185 to Arg202 are compositionally biased toward basic residues. Thr340 carries the phosphothreonine modification. 2 disordered regions span residues Glu474–Tyr605 and Ile627–Gly693. Positions Val487–Asn496 are enriched in polar residues. Acidic residues predominate over residues Glu509–Glu519. Residues Asn531–Asn542 show a composition bias toward low complexity. Acidic residues-rich tracts occupy residues Ser559–Asp602 and Ile627–Asp675. Residues Ser658, Ser668, and Ser671 each carry the phosphoserine modification.

It belongs to the nucleosome assembly protein (NAP) family. Interacts with histones. Interacts with CASK. Part of a complex containing CASK, TBR1 and TSPYL2. Phosphorylation at Ser-20 and/or Thr-340 impairs function on cell proliferation. As to expression, ubiquitously expressed, with highest levels in brain, testis and heart, and lowest levels in liver and pancreas.

It is found in the nucleus. Its subcellular location is the cytoplasm. Functionally, part of the CASK/TBR1/TSPYL2 transcriptional complex which modulates gene expression in response to neuronal synaptic activity, probably by facilitating nucleosome assembly. May inhibit cell proliferation by inducing p53-dependent CDKN1A expression. The sequence is that of Testis-specific Y-encoded-like protein 2 (TSPYL2) from Homo sapiens (Human).